Consider the following 487-residue polypeptide: ATP-dependent rRNA helicase RRP3 (487 aa).

Residues 22-67 (IKRKALEKQQQAHANEPSPSDEDSAQSNSKDSNSNEQPEESEEIFE) form a disordered region. The Q motif motif lies at 67–95 (ESFTELDLVPELIEACKNLNYNKPTPIQS). One can recognise a Helicase ATP-binding domain in the interval 98-270 (IPPALKGSDI…RASLTNPVKC (173 aa)). An ATP-binding site is contributed by 111–118 (AQTGSGKT). The short motif at 217–220 (DEAD) is the DEAD box element. One can recognise a Helicase C-terminal domain in the interval 298 to 442 (LIYLLNEFIG…ENVDKDAILA (145 aa)). Residues 459 to 487 (NRRNKEKQARGKGRRGRMATRDNMDREER) are disordered. Basic and acidic residues predominate over residues 477–487 (ATRDNMDREER).

This sequence belongs to the DEAD box helicase family. DDX47/RRP3 subfamily. In terms of assembly, interacts with the SSU processome.

It localises to the nucleus. It catalyses the reaction ATP + H2O = ADP + phosphate + H(+). ATP-dependent rRNA helicase required for pre-ribosomal RNA processing. Involved in the maturation of the 35S-pre-rRNA and to its cleavage to mature 18S rRNA. The sequence is that of ATP-dependent rRNA helicase RRP3 from Kluyveromyces lactis (strain ATCC 8585 / CBS 2359 / DSM 70799 / NBRC 1267 / NRRL Y-1140 / WM37) (Yeast).